We begin with the raw amino-acid sequence, 181 residues long: Isopentenyl-diphosphate Delta-isomerase (181 aa).

Mn(2+) contacts are provided by H24 and H30. In terms of domain architecture, Nudix hydrolase spans L28 to T168. C68 is an active-site residue. Residue H70 coordinates Mn(2+). A Mg(2+)-binding site is contributed by E88. 2 residues coordinate Mn(2+): E117 and E119. The active site involves E119.

This sequence belongs to the IPP isomerase type 1 family. It depends on Mg(2+) as a cofactor. Mn(2+) serves as cofactor.

The protein localises to the cytoplasm. The catalysed reaction is isopentenyl diphosphate = dimethylallyl diphosphate. The protein operates within isoprenoid biosynthesis; dimethylallyl diphosphate biosynthesis; dimethylallyl diphosphate from isopentenyl diphosphate: step 1/1. In terms of biological role, catalyzes the 1,3-allylic rearrangement of the homoallylic substrate isopentenyl (IPP) to its highly electrophilic allylic isomer, dimethylallyl diphosphate (DMAPP). The polypeptide is Isopentenyl-diphosphate Delta-isomerase (Aliivibrio fischeri (strain MJ11) (Vibrio fischeri)).